Here is a 245-residue protein sequence, read N- to C-terminus: uncharacterized protein (245 aa).

2 helical membrane-spanning segments follow: residues 29-51 and 61-83; these read LVVLIVSFLSILFSAGYAFRIGM and TILFYGFVAAAFHFILSLYLMLH.

It is found in the cell membrane. This is an uncharacterized protein from Treponema pallidum (strain Nichols).